The sequence spans 313 residues: MFSEPGKSKFQIDLRRHLRSQNICDNLIHLICEIAEASKYVINAVRTGDLGVAGTSNLYGEEQLALDVLSDRIMRKRLIHSGVVCNIASEEMDEIYQVTTDSNGLYSVAYDPLDGSSLVDVNLAVGTIVSIFSGCDLLQEGRKQVAAMYILYGPRVSLVYTVGDGVHEFTMNQLMEFNLTRENIRMQPDGNIYSPGGLRNKYNEGDEKFIRYLEAKGCKLRYSGGFVPDINQVLMKGKGLFMYPALNGSPNGKLRLLFELNPMAFIIEHAGGAATNGKIPILDIKPEGLDQRAPIYIGCVEDVNRAMEYVYKS.

The Mg(2+) site is built by Glu-90, Asp-111, Leu-113, and Asp-114. Substrate-binding positions include 114–117, Tyr-222, and Lys-253; that span reads DGSS. Mg(2+) is bound at residue Glu-259.

Belongs to the FBPase class 1 family. As to quaternary structure, homotetramer. The cofactor is Mg(2+).

The protein resides in the cytoplasm. The enzyme catalyses beta-D-fructose 1,6-bisphosphate + H2O = beta-D-fructose 6-phosphate + phosphate. It functions in the pathway carbohydrate biosynthesis; gluconeogenesis. The chain is Fructose-1,6-bisphosphatase class 1 from Geotalea uraniireducens (strain Rf4) (Geobacter uraniireducens).